A 288-amino-acid polypeptide reads, in one-letter code: MKGIILAGGSGTRLYPITRGVSKQLLPVYDKPMIYYPLSVLMLAGIRDILVITAPEDNASFKRLLGDGSDFGISISYAVQPSPDGLAQAFIIGEEFIGNDNVCLVLGDNIFYGQSFTQTLKQAAAQTHGATVFAYQVKNPERFGVVEFNENFRAVSIEEKPQRPKSDWAVTGLYFYDNRAVEFAKQLKPSARGELEISDLNRMYLEDGSLSVQILGRGFAWLDTGTHESLHEAASFVQTVQNIQNLHIACLEEIAWRNGWLSDEKLEELARTMAKNQYGQYLLRLLKK.

Positions 108 and 223 each coordinate Mg(2+).

Belongs to the glucose-1-phosphate thymidylyltransferase family. Homotetramer. The cofactor is Mg(2+).

It carries out the reaction dTTP + alpha-D-glucose 1-phosphate + H(+) = dTDP-alpha-D-glucose + diphosphate. Catalyzes the formation of dTDP-glucose, from dTTP and glucose 1-phosphate, as well as its pyrophosphorolysis. This Neisseria meningitidis serogroup A / serotype 4A (strain DSM 15465 / Z2491) protein is Glucose-1-phosphate thymidylyltransferase (rmlA1).